Here is a 208-residue protein sequence, read N- to C-terminus: MVDVRTQTLLAQLRQQGIRDERLLQAMEAVPREHFIDEAFEHKAYDNTALPIGLGQTISQPYIVARMTELLALWPESRVLEIGTGSGYQTAILAHLVKHVCSVERIKKLQWQAKRRLKLLDLHNISTRHGDGWQGWLSRGPFDAIIVTAAPPEIPQALMAQLDEGGVMVLPVGDEQQHLTRVRRKGGEFVVDTVEAVRFVPLVKGELA.

Residue Ser59 is part of the active site.

This sequence belongs to the methyltransferase superfamily. L-isoaspartyl/D-aspartyl protein methyltransferase family.

It localises to the cytoplasm. The catalysed reaction is [protein]-L-isoaspartate + S-adenosyl-L-methionine = [protein]-L-isoaspartate alpha-methyl ester + S-adenosyl-L-homocysteine. Catalyzes the methyl esterification of L-isoaspartyl residues in peptides and proteins that result from spontaneous decomposition of normal L-aspartyl and L-asparaginyl residues. It plays a role in the repair and/or degradation of damaged proteins. This Sodalis glossinidius (strain morsitans) protein is Protein-L-isoaspartate O-methyltransferase.